Reading from the N-terminus, the 240-residue chain is uncharacterized protein (240 aa).

The Cytoplasmic portion of the chain corresponds to 1-85 (MSGFIKSTLL…LCGCCCWTNT (85 aa)). Residues 86-106 (IGWAPLLALLPVIGPLLMYWV) traverse the membrane as a helical segment. At 107–131 (HDKLIELADDRYKLPAEIKVKMHGN) the chain is on the extracellular side. The chain crosses the membrane as a helical span at residues 132-152 (IVIDLLISLVPILGSVFAWLH). Over 153–240 (ACSTRNAAIV…TNGRPQRGYR (88 aa)) the chain is Cytoplasmic. The interval 181-240 (QKEENEKHSNANTAPPVVGGNKNVNGNRNNSKMYNRPPVTAPPAPAYTRSTNGRPQRGYR) is disordered. Positions 197–210 (VVGGNKNVNGNRNN) are enriched in low complexity.

Its subcellular location is the membrane. This is an uncharacterized protein from Saccharomyces cerevisiae (strain ATCC 204508 / S288c) (Baker's yeast).